The chain runs to 50 residues: Small ribosomal subunit protein uS14 (50 aa).

Zn(2+)-binding residues include Cys15, Cys18, Cys33, and Cys36.

The protein belongs to the universal ribosomal protein uS14 family. Zinc-binding uS14 subfamily. In terms of assembly, part of the 30S ribosomal subunit. Zn(2+) serves as cofactor.

Functionally, binds 16S rRNA, required for the assembly of 30S particles. The sequence is that of Small ribosomal subunit protein uS14 from Methanosarcina mazei (strain ATCC BAA-159 / DSM 3647 / Goe1 / Go1 / JCM 11833 / OCM 88) (Methanosarcina frisia).